Reading from the N-terminus, the 164-residue chain is Cyclic pyranopterin monophosphate synthase (164 aa).

Substrate is bound by residues 75 to 77 (MCH) and 116 to 117 (ME). Asp-131 is an active-site residue.

This sequence belongs to the MoaC family. Homohexamer; trimer of dimers.

The enzyme catalyses (8S)-3',8-cyclo-7,8-dihydroguanosine 5'-triphosphate = cyclic pyranopterin phosphate + diphosphate. It functions in the pathway cofactor biosynthesis; molybdopterin biosynthesis. Its function is as follows. Catalyzes the conversion of (8S)-3',8-cyclo-7,8-dihydroguanosine 5'-triphosphate to cyclic pyranopterin monophosphate (cPMP). The polypeptide is Cyclic pyranopterin monophosphate synthase (Staphylococcus aureus (strain bovine RF122 / ET3-1)).